Reading from the N-terminus, the 652-residue chain is DNA ligase (652 aa).

NAD(+) is bound by residues 29-33 (DSDYD), 78-79 (SL), and E107. K109 functions as the N6-AMP-lysine intermediate in the catalytic mechanism. NAD(+) is bound by residues R130, E164, K278, and K302. C395, C398, C413, and C418 together coordinate Zn(2+). Residues 577-652 (NSDAALFGLT…IEDEDWLRQL (76 aa)) form the BRCT domain.

It belongs to the NAD-dependent DNA ligase family. LigA subfamily. The cofactor is Mg(2+). Mn(2+) is required as a cofactor.

The enzyme catalyses NAD(+) + (deoxyribonucleotide)n-3'-hydroxyl + 5'-phospho-(deoxyribonucleotide)m = (deoxyribonucleotide)n+m + AMP + beta-nicotinamide D-nucleotide.. DNA ligase that catalyzes the formation of phosphodiester linkages between 5'-phosphoryl and 3'-hydroxyl groups in double-stranded DNA using NAD as a coenzyme and as the energy source for the reaction. It is essential for DNA replication and repair of damaged DNA. The polypeptide is DNA ligase (Streptococcus pyogenes serotype M12 (strain MGAS2096)).